Consider the following 1467-residue polypeptide: Gag-Pol polyprotein (1467 aa).

G2 carries N-myristoyl glycine; by host lipidation. A Nuclear export signal motif is present at residues 16-22 (FEHIRLR). The Nuclear localization signal signature appears at 26–32 (KKKYQIK). Positions 116 to 144 (NAERNTTETSSGQKKNDKGVTVPPGGSQN) are disordered. 2 CCHC-type zinc fingers span residues 402–419 (VKCY…QCPE) and 423–440 (MRCL…DCRG). One can recognise a Peptidase A2 domain in the interval 535 to 606 (IKALLDTGAD…TPINIIGRNL (72 aa)). The For protease activity; shared with dimeric partner role is filled by D540. The Reverse transcriptase domain maps to 662-852 (EGKISRVGGE…PPYEWMGYKL (191 aa)). Mg(2+) is bound by residues D728, D803, and D804. The interval 845–853 (YEWMGYKLW) is RT 'primer grip'. Positions 1015 to 1031 (WEQWWADYWQVSWIPEW) match the Tryptophan repeat motif motif. The region spanning 1050 to 1173 (PIPKEDVYYV…IDKLVSKGIR (124 aa)) is the RNase H type-1 domain. D1114 and D1165 together coordinate Mg(2+). Residues 1179–1220 (EKIEEAQEKHERYHNNWKNLADTYGLPQIVAKEIVAMCPKCQ) form an Integrase-type zinc finger. Zn(2+) is bound by residues H1188, H1192, C1216, and C1219. Residues 1230-1380 (VDASPGTWQM…TSAERLINII (151 aa)) enclose the Integrase catalytic domain. D1240 and D1292 together coordinate Mg(2+). The segment at residues 1399-1446 (FRVYYREGRDPVWKGPAQLIWKGEGAVVLKDGSDLKVVPRRKAKIIKD) is a DNA-binding region (integrase-type). The segment at 1447-1467 (YEPKQRVGNEGDVEGTRGSDN) is disordered.

As to quaternary structure, homotrimer. Interacts with gp41 (via C-terminus). In terms of assembly, homodimer. The active site consists of two apposed aspartic acid residues. Heterodimer of p66 RT and p51 RT (RT p66/p51). Heterodimerization of RT is essential for DNA polymerase activity. Despite the sequence identities, p66 RT and p51 RT have distinct folding. As to quaternary structure, homotetramer; may further associate as a homohexadecamer. It depends on Mg(2+) as a cofactor. Specific enzymatic cleavages by the viral protease yield mature proteins. The protease is released by autocatalytic cleavage. The polyprotein is cleaved during and after budding, this process is termed maturation. Proteolytic cleavage of p66 RT removes the RNase H domain to yield the p51 RT subunit. In terms of processing, capsid protein p24 is phosphorylated.

It localises to the virion. The protein localises to the host nucleus. Its subcellular location is the host cytoplasm. The protein resides in the host cell membrane. It carries out the reaction Specific for a P1 residue that is hydrophobic, and P1' variable, but often Pro.. It catalyses the reaction Endohydrolysis of RNA in RNA/DNA hybrids. Three different cleavage modes: 1. sequence-specific internal cleavage of RNA. Human immunodeficiency virus type 1 and Moloney murine leukemia virus enzymes prefer to cleave the RNA strand one nucleotide away from the RNA-DNA junction. 2. RNA 5'-end directed cleavage 13-19 nucleotides from the RNA end. 3. DNA 3'-end directed cleavage 15-20 nucleotides away from the primer terminus.. The catalysed reaction is 3'-end directed exonucleolytic cleavage of viral RNA-DNA hybrid.. The enzyme catalyses DNA(n) + a 2'-deoxyribonucleoside 5'-triphosphate = DNA(n+1) + diphosphate. With respect to regulation, the viral protease is inhibited by many synthetic protease inhibitors (PIs), such as amprenavir, atazanavir, indinavir, loprinavir, nelfinavir, ritonavir and saquinavir. RT can be inhibited either by nucleoside RT inhibitors (NRTIs) or by non nucleoside RT inhibitors (NNRTIs). NRTIs act as chain terminators, whereas NNRTIs inhibit DNA polymerization by binding a small hydrophobic pocket near the RT active site and inducing an allosteric change in this region. Classical NRTIs are abacavir, adefovir (PMEA), didanosine (ddI), lamivudine (3TC), stavudine (d4T), tenofovir (PMPA), zalcitabine (ddC), and zidovudine (AZT). Classical NNRTIs are atevirdine (BHAP U-87201E), delavirdine, efavirenz (DMP-266), emivirine (I-EBU), and nevirapine (BI-RG-587). The tritherapies used as a basic effective treatment of AIDS associate two NRTIs and one NNRTI. Use of protease inhibitors in tritherapy regimens permit more ambitious therapeutic strategies. Gag-Pol polyprotein and Gag polyprotein may regulate their own translation, by the binding genomic RNA in the 5'-UTR. At low concentration, Gag-Pol and Gag would promote translation, whereas at high concentration, the polyproteins encapsidate genomic RNA and then shut off translation. Its function is as follows. Matrix protein p17 has two main functions: in infected cell, it targets Gag and Gag-pol polyproteins to the plasma membrane via a multipartite membrane-binding signal, that includes its myristointegration complex. The myristoylation signal and the NLS exert conflicting influences its subcellular localization. The key regulation of these motifs might be phosphorylation of a portion of MA molecules on the C-terminal tyrosine at the time of virus maturation, by virion-associated cellular tyrosine kinase. Implicated in the release from host cell mediated by Vpu. In terms of biological role, capsid protein p24 forms the conical core that encapsulates the genomic RNA-nucleocapsid complex in the virion. The core is constituted by capsid protein hexamer subunits. The core is disassembled soon after virion entry. Interaction with host PPIA/CYPA protects the virus from restriction by host TRIM5-alpha and from an unknown antiviral activity in host cells. This capsid restriction by TRIM5 is one of the factors which restricts SIV to the simian species. Functionally, nucleocapsid protein p7 encapsulates and protects viral dimeric unspliced (genomic) RNA. Binds these RNAs through its zinc fingers. Facilitates rearangement of nucleic acid secondary structure during retrotranscription of genomic RNA. This capability is referred to as nucleic acid chaperone activity. The aspartyl protease mediates proteolytic cleavages of Gag and Gag-Pol polyproteins during or shortly after the release of the virion from the plasma membrane. Cleavages take place as an ordered, step-wise cascade to yield mature proteins. This process is called maturation. Displays maximal activity during the budding process just prior to particle release from the cell. Also cleaves Nef and Vif, probably concomitantly with viral structural proteins on maturation of virus particles. Hydrolyzes host EIF4GI and PABP1 in order to shut off the capped cellular mRNA translation. The resulting inhibition of cellular protein synthesis serves to ensure maximal viral gene expression and to evade host immune response. Its function is as follows. Reverse transcriptase/ribonuclease H (RT) is a multifunctional enzyme that converts the viral dimeric RNA genome into dsDNA in the cytoplasm, shortly after virus entry into the cell. This enzyme displays a DNA polymerase activity that can copy either DNA or RNA templates, and a ribonuclease H (RNase H) activity that cleaves the RNA strand of RNA-DNA heteroduplexes in a partially processive 3' to 5' endonucleasic mode. Conversion of viral genomic RNA into dsDNA requires many steps. A tRNA binds to the primer-binding site (PBS) situated at the 5'-end of the viral RNA. RT uses the 3' end of the tRNA primer to perform a short round of RNA-dependent minus-strand DNA synthesis. The reading proceeds through the U5 region and ends after the repeated (R) region which is present at both ends of viral RNA. The portion of the RNA-DNA heteroduplex is digested by the RNase H, resulting in a ssDNA product attached to the tRNA primer. This ssDNA/tRNA hybridizes with the identical R region situated at the 3' end of viral RNA. This template exchange, known as minus-strand DNA strong stop transfer, can be either intra- or intermolecular. RT uses the 3' end of this newly synthesized short ssDNA to perform the RNA-dependent minus-strand DNA synthesis of the whole template. RNase H digests the RNA template except for two polypurine tracts (PPTs) situated at the 5'-end and near the center of the genome. It is not clear if both polymerase and RNase H activities are simultaneous. RNase H can probably proceed both in a polymerase-dependent (RNA cut into small fragments by the same RT performing DNA synthesis) and a polymerase-independent mode (cleavage of remaining RNA fragments by free RTs). Secondly, RT performs DNA-directed plus-strand DNA synthesis using the PPTs that have not been removed by RNase H as primers. PPTs and tRNA primers are then removed by RNase H. The 3' and 5' ssDNA PBS regions hybridize to form a circular dsDNA intermediate. Strand displacement synthesis by RT to the PBS and PPT ends produces a blunt ended, linear dsDNA copy of the viral genome that includes long terminal repeats (LTRs) at both ends. In terms of biological role, integrase catalyzes viral DNA integration into the host chromosome, by performing a series of DNA cutting and joining reactions. This enzyme activity takes place after virion entry into a cell and reverse transcription of the RNA genome in dsDNA. The first step in the integration process is 3' processing. This step requires a complex comprising the viral genome, matrix protein, Vpr and integrase. This complex is called the pre-integration complex (PIC). The integrase protein removes 2 nucleotides from each 3' end of the viral DNA, leaving recessed CA OH's at the 3' ends. In the second step, the PIC enters cell nucleus. This process is mediated through integrase and Vpr proteins, and allows the virus to infect a non dividing cell. This ability to enter the nucleus is specific of lentiviruses, other retroviruses cannot and rely on cell division to access cell chromosomes. In the third step, termed strand transfer, the integrase protein joins the previously processed 3' ends to the 5' ends of strands of target cellular DNA at the site of integration. The 5'-ends are produced by integrase-catalyzed staggered cuts, 5 bp apart. A Y-shaped, gapped, recombination intermediate results, with the 5'-ends of the viral DNA strands and the 3' ends of target DNA strands remaining unjoined, flanking a gap of 5 bp. The last step is viral DNA integration into host chromosome. This involves host DNA repair synthesis in which the 5 bp gaps between the unjoined strands are filled in and then ligated. Since this process occurs at both cuts flanking the SIV genome, a 5 bp duplication of host DNA is produced at the ends of SIV integration. Alternatively, Integrase may catalyze the excision of viral DNA just after strand transfer, this is termed disintegration. This Cercopithecidae (Old World monkeys) protein is Gag-Pol polyprotein (gag-pol).